The chain runs to 288 residues: MAAKIIDGKTIAQQVRSEVAQKVQARVAAGLRAPGLAVVLVGSNPASQIYVASKRKACEEVGFVSRSYDLPETTSEAELLELIDVLNADNTIDGILVQLPLPAGIDNVKVLERIHPDKDVDGFHPYNVGRLCQRAPRLRPCTPRGIVTLLERYNIDTFGLNAVVIGASNIVGRPMSMELLLAGCTTTVTHRFTKNLRHHVENADLLIVAVGKPGFIPGDWIKEGAIVIDVGINRLENGKVVGDVVFEDAAKRASYITPVPGGVGPMTVATLIENTLQACVEYHDPQDE.

Residues 166-168 and Ile232 each bind NADP(+); that span reads GAS.

This sequence belongs to the tetrahydrofolate dehydrogenase/cyclohydrolase family. In terms of assembly, homodimer.

The catalysed reaction is (6R)-5,10-methylene-5,6,7,8-tetrahydrofolate + NADP(+) = (6R)-5,10-methenyltetrahydrofolate + NADPH. The enzyme catalyses (6R)-5,10-methenyltetrahydrofolate + H2O = (6R)-10-formyltetrahydrofolate + H(+). It functions in the pathway one-carbon metabolism; tetrahydrofolate interconversion. In terms of biological role, catalyzes the oxidation of 5,10-methylenetetrahydrofolate to 5,10-methenyltetrahydrofolate and then the hydrolysis of 5,10-methenyltetrahydrofolate to 10-formyltetrahydrofolate. The chain is Bifunctional protein FolD from Escherichia fergusonii (strain ATCC 35469 / DSM 13698 / CCUG 18766 / IAM 14443 / JCM 21226 / LMG 7866 / NBRC 102419 / NCTC 12128 / CDC 0568-73).